The chain runs to 588 residues: DELLA protein GAI (588 aa).

Over residues 1 to 15 (MKRDRDRDREREKRA) the composition is skewed to basic and acidic residues. The interval 1–38 (MKRDRDRDREREKRAFSNGAVSSGKSKIWEEDEEEKPD) is disordered. Positions 42 to 46 (DELLA) match the DELLA motif motif. Residues 152–177 (GAVFNSDSNKRHRSTTSSFSTTSSSM) are disordered. A compositionally biased stretch (low complexity) spans 166-177 (TTSSFSTTSSSM). The GRAS domain occupies 190 to 574 (VDSQETGVRL…RPLIATSAWK (385 aa)). Residues 197–251 (VRLVHTLMACAEAVQQENLTLADQLVRHIGILAVSQSGAMRKVATYFAEALARRI) are leucine repeat I (LRI). The segment at 269-334 (QMHFYETCPY…GGPPAFRLTG (66 aa)) is VHIID. The VHIID motif lies at 300-304 (VHVID). A leucine repeat II (LRII) region spans residues 348–380 (QVGWKLAQLAETIGVEFEFRGFVANSLADLDAT). The interval 392 to 495 (VAINSVFELH…EVYLGRQICN (104 aa)) is PFYRE. The LXXLL motif signature appears at 400-404 (LHRLL). Residues 498 to 574 (ACEGSDRVER…RPLIATSAWK (77 aa)) are SAW.

Belongs to the GRAS family. DELLA subfamily. Post-translationally, phosphorylated. In terms of processing, ubiquitinated. Upon GA application it is ubiquitinated, leading to its subsequent degradation. In terms of tissue distribution, expressed in both vegetative and reproductive tissues.

Its subcellular location is the nucleus. In terms of biological role, probable transcriptional regulator that acts as a repressor of the gibberellin (GA) signaling pathway. Probably acts by participating in large multiprotein complexes that repress transcription of GA-inducible genes. Upon GA application, it is degraded by the proteasome, allowing the GA signaling pathway. Its degradation is not essential for germination. The protein is DELLA protein GAI (GAI) of Solanum lycopersicum (Tomato).